The primary structure comprises 355 residues: Receptor-like serine/threonine-protein kinase At1g78530 (355 aa).

The Extracellular segment spans residues 1–8 (MANAKETT). The helical transmembrane segment at 9 to 29 (FYITISVVAFVIGKIVIALLF) threads the bilayer. The Cytoplasmic portion of the chain corresponds to 30 to 355 (YKRWKRKHTI…YIKLSTRSSF (326 aa)). A Protein kinase domain is found at 75–347 (LSNKDILGSG…TEVVKLLEYI (273 aa)). ATP contacts are provided by residues 81–89 (LGSGGFGTV) and lysine 103. At tyrosine 148 the chain carries Phosphotyrosine. The active-site Proton acceptor is aspartate 197. Phosphoserine is present on residues serine 201 and serine 230. Residues threonine 231 and threonine 236 each carry the phosphothreonine modification. At tyrosine 244 the chain carries Phosphotyrosine.

Belongs to the protein kinase superfamily. Ser/Thr protein kinase family.

Its subcellular location is the cell membrane. The enzyme catalyses L-seryl-[protein] + ATP = O-phospho-L-seryl-[protein] + ADP + H(+). The catalysed reaction is L-threonyl-[protein] + ATP = O-phospho-L-threonyl-[protein] + ADP + H(+). The protein is Receptor-like serine/threonine-protein kinase At1g78530 of Arabidopsis thaliana (Mouse-ear cress).